A 202-amino-acid chain; its full sequence is Ras-related protein RIC1 (202 aa).

Residues glycine 15–cysteine 23, tyrosine 33–threonine 40, aspartate 63–glutamine 67, asparagine 121–aspartate 124, and serine 151–lysine 153 each bind GTP. The short motif at tyrosine 37–phenylalanine 45 is the Effector region element. Residues alanine 174–alanine 185 show a composition bias toward polar residues. The segment at alanine 174–serine 202 is disordered. S-geranylgeranyl cysteine attachment occurs at residues cysteine 200 and cysteine 201.

This sequence belongs to the small GTPase superfamily. Rab family.

It is found in the cell membrane. Functionally, possesses GTPase activity. The polypeptide is Ras-related protein RIC1 (RIC1) (Oryza sativa subsp. japonica (Rice)).